The primary structure comprises 92 residues: Probable Fe(2+)-trafficking protein (92 aa).

The protein belongs to the Fe(2+)-trafficking protein family.

Could be a mediator in iron transactions between iron acquisition and iron-requiring processes, such as synthesis and/or repair of Fe-S clusters in biosynthetic enzymes. This is Probable Fe(2+)-trafficking protein from Shewanella frigidimarina (strain NCIMB 400).